The chain runs to 365 residues: Cobalt-precorrin-5B C(1)-methyltransferase (365 aa).

The protein belongs to the CbiD family.

It catalyses the reaction Co-precorrin-5B + S-adenosyl-L-methionine = Co-precorrin-6A + S-adenosyl-L-homocysteine. Its pathway is cofactor biosynthesis; adenosylcobalamin biosynthesis; cob(II)yrinate a,c-diamide from sirohydrochlorin (anaerobic route): step 6/10. Functionally, catalyzes the methylation of C-1 in cobalt-precorrin-5B to form cobalt-precorrin-6A. The polypeptide is Cobalt-precorrin-5B C(1)-methyltransferase (Paraburkholderia phytofirmans (strain DSM 17436 / LMG 22146 / PsJN) (Burkholderia phytofirmans)).